A 284-amino-acid chain; its full sequence is Pantothenate synthetase (284 aa).

30–37 (MGALHEGH) is a binding site for ATP. The active-site Proton donor is the His-37. Position 61 (Gln-61) interacts with (R)-pantoate. Beta-alanine is bound at residue Gln-61. An ATP-binding site is contributed by 147–150 (GEKD). Gln-153 contacts (R)-pantoate. ATP contacts are provided by residues Val-176 and 184–187 (TSSR).

It belongs to the pantothenate synthetase family. In terms of assembly, homodimer.

Its subcellular location is the cytoplasm. The catalysed reaction is (R)-pantoate + beta-alanine + ATP = (R)-pantothenate + AMP + diphosphate + H(+). It functions in the pathway cofactor biosynthesis; (R)-pantothenate biosynthesis; (R)-pantothenate from (R)-pantoate and beta-alanine: step 1/1. In terms of biological role, catalyzes the condensation of pantoate with beta-alanine in an ATP-dependent reaction via a pantoyl-adenylate intermediate. The polypeptide is Pantothenate synthetase (Chlorobaculum tepidum (strain ATCC 49652 / DSM 12025 / NBRC 103806 / TLS) (Chlorobium tepidum)).